The following is a 205-amino-acid chain: Small ribosomal subunit protein uS4 (205 aa).

An S4 RNA-binding domain is found at 94-154 (SRLDNSVYRA…TRKDGKIRKN (61 aa)).

The protein belongs to the universal ribosomal protein uS4 family. Part of the 30S ribosomal subunit. Contacts protein S5. The interaction surface between S4 and S5 is involved in control of translational fidelity.

In terms of biological role, one of the primary rRNA binding proteins, it binds directly to 16S rRNA where it nucleates assembly of the body of the 30S subunit. With S5 and S12 plays an important role in translational accuracy. The polypeptide is Small ribosomal subunit protein uS4 (Mesomycoplasma hyopneumoniae (strain 232) (Mycoplasma hyopneumoniae)).